The chain runs to 249 residues: Methylthioribulose-1-phosphate dehydratase (249 aa).

Residues His-103 and His-105 each coordinate Zn(2+).

The protein belongs to the aldolase class II family. MtnB subfamily. Zn(2+) is required as a cofactor.

The catalysed reaction is 5-(methylsulfanyl)-D-ribulose 1-phosphate = 5-methylsulfanyl-2,3-dioxopentyl phosphate + H2O. It participates in amino-acid biosynthesis; L-methionine biosynthesis via salvage pathway; L-methionine from S-methyl-5-thio-alpha-D-ribose 1-phosphate: step 2/6. Its function is as follows. Catalyzes the dehydration of methylthioribulose-1-phosphate (MTRu-1-P) into 2,3-diketo-5-methylthiopentyl-1-phosphate (DK-MTP-1-P). This is Methylthioribulose-1-phosphate dehydratase from Leptospira interrogans serogroup Icterohaemorrhagiae serovar copenhageni (strain Fiocruz L1-130).